The sequence spans 152 residues: Protein SprT-like (152 aa).

Residues 7-148 (QRLVEEVSLQ…GKCKGKLNLI (142 aa)) form the SprT-like domain. Histidine 67 is a binding site for Zn(2+). Glutamate 68 is an active-site residue. Residue histidine 71 coordinates Zn(2+).

The protein belongs to the SprT family. Requires Zn(2+) as cofactor.

It is found in the cytoplasm. The protein is Protein SprT-like of Bacillus cereus (strain 03BB102).